The chain runs to 431 residues: tRNA(Ile)-lysidine synthase (431 aa).

26–31 (SGGIDS) lines the ATP pocket.

The protein belongs to the tRNA(Ile)-lysidine synthase family.

It localises to the cytoplasm. The enzyme catalyses cytidine(34) in tRNA(Ile2) + L-lysine + ATP = lysidine(34) in tRNA(Ile2) + AMP + diphosphate + H(+). In terms of biological role, ligates lysine onto the cytidine present at position 34 of the AUA codon-specific tRNA(Ile) that contains the anticodon CAU, in an ATP-dependent manner. Cytidine is converted to lysidine, thus changing the amino acid specificity of the tRNA from methionine to isoleucine. This chain is tRNA(Ile)-lysidine synthase, found in Wolbachia sp. subsp. Brugia malayi (strain TRS).